Here is a 456-residue protein sequence, read N- to C-terminus: Exodeoxyribonuclease 7 large subunit (456 aa).

The protein belongs to the XseA family. As to quaternary structure, heterooligomer composed of large and small subunits.

Its subcellular location is the cytoplasm. It catalyses the reaction Exonucleolytic cleavage in either 5'- to 3'- or 3'- to 5'-direction to yield nucleoside 5'-phosphates.. Its function is as follows. Bidirectionally degrades single-stranded DNA into large acid-insoluble oligonucleotides, which are then degraded further into small acid-soluble oligonucleotides. This chain is Exodeoxyribonuclease 7 large subunit, found in Azotobacter vinelandii (strain DJ / ATCC BAA-1303).